Here is a 2278-residue protein sequence, read N- to C-terminus: Genome polyprotein (2278 aa).

An SF3 helicase domain is found at 454 to 609 (LESTANSIRS…EDWKKKNPGK (156 aa)). 481-488 (GPPGIGKT) serves as a coordination point for ATP. The tract at residues 939-958 (EEAKGKTKHGRGAKHARRGG) is disordered. Residues 944-956 (KTKHGRGAKHARR) are compositionally biased toward basic residues. Tyr966 is subject to O-(5'-phospho-RNA)-tyrosine. The region spanning 1056–1204 (APTPIVTFTS…TKLAQRVTKT (149 aa)) is the Peptidase C24 domain. Residues His1086, Glu1107, and Cys1171 each act as for 3CLpro activity in the active site. Positions 1443–1568 (GVLYCLDYSK…SVCPATASIF (126 aa)) constitute a RdRp catalytic domain.

In terms of assembly, homodimer. Homomultimer. Post-translationally, specific enzymatic cleavages in vivo yield mature proteins. Pro-Pol is first autocatalytically cleaved, then processes the whole polyprotein. VPg is uridylylated by the polymerase and is covalently attached to the 5'-end of the polyadenylated genomic and subgenomic RNAs. This uridylylated form acts as a nucleotide-peptide primer for the polymerase.

Its subcellular location is the virion. The protein resides in the host cytoplasm. It catalyses the reaction a ribonucleoside 5'-triphosphate + H2O = a ribonucleoside 5'-diphosphate + phosphate + H(+). The catalysed reaction is RNA(n) + a ribonucleoside 5'-triphosphate = RNA(n+1) + diphosphate. The enzyme catalyses Endopeptidase with a preference for cleavage when the P1 position is occupied by Glu-|-Xaa and the P1' position is occupied by Gly-|-Yaa.. Functionally, together with NTPase and NS4, initiates the formation of the replication complex. Induces the proliferation of the host smooth ER membranes forming long tubular structures. These remodeled membranes probably form the viral factories that contain the replication complex. In terms of biological role, displays NTPase activity, but no helicase activity. Induces the formation of convoluted membranes derived from the host ER. These remodeled membranes probably form the viral factories that contain the replication complex. Together with NS2 and NS4, initiates the formation of the replication complex. Its function is as follows. Probable key protein responsible for the formation of membrane alterations by the virus. Induces the formation of convoluted membranes derived from the host ER. These remodeled membranes probably form the viral factories that contain the replication complex. Together with NS2 and NTPase, initiates the formation of the replication complex. Viral genome-linked protein is covalently linked to the 5'-end of the positive-strand, negative-strand genomic RNAs and subgenomic RNA. Acts as a genome-linked replication primer. May recruit ribosome to viral RNA thereby promoting viral proteins translation. Interacts with host translation initiation complex to allow the translation of viral proteins. Functionally, protease-polymerase p76 processes the polyprotein: Pro-Pol is first released by autocleavage, then all other proteins are cleaved. Cleaves host translation initiation factor eIF4G1, eIF4G2 and PABP1 thereby inducing a shutdown of host protein synthesis. This shutdown may not prevent viral mRNA from being translated since viral Vpg replaces the cap. It is also an RNA-directed RNA polymerase which replicates genomic and antigenomic viral RNA by recognizing specific signals. Also transcribes a subgenomic mRNA by initiating RNA synthesis internally on antigenomic RNA. This sgRNA codes for structural proteins. Catalyzes the covalent attachment VPg with viral RNAs. In terms of biological role, capsid protein self assembles to form an icosahedral capsid with a T=3 symmetry, about 38 nm in diameter, and consisting of 180 capsid proteins. The capsid encapsulate the genomic RNA and VP2 proteins. Attaches virion to target cells, inducing endocytosis of the viral particle. Acidification of the endosome induces conformational change of capsid protein thereby injecting virus genomic RNA into host cytoplasm. The sequence is that of Genome polyprotein from Homo sapiens (Human).